Consider the following 367-residue polypeptide: Protein valois (367 aa).

3 WD repeats span residues Q101 to Q139, A152 to T192, and S198 to T238. The interaction with csul stretch occupies residues L309 to K367.

As to quaternary structure, interacts with csul and tud. In oocytes, localizes to pole plasm and nuage (at protein level). Expressed stronger in the germline than in somatic cells. In the germarium it sometimes concentrates in perinuclear aggregates that disappear by stage 2 of oogenesis. At later stages, it is uniformly distributed in the nurse cells and oocyte, as well as in young embryos, with no particular enrichment at the posterior or inside the pole cells (at protein level).

The protein localises to the cytoplasm. In terms of biological role, involved in specific localization of cytoplasmic proteins during the formation of pole plasm. Required for synthesis and/or stability of oskar protein (osk) and localization of tudor (tud) in both the nuage and posterior pole of the oocyte. Required for normal posterior localization of osk in later stages of oogenesis and for posterior localization of the vasa (vas) protein during the entire process of pole plasm assembly. May act by regulating the complex that contains the arginine N-methyltransferase csul. This is Protein valois (vls) from Drosophila melanogaster (Fruit fly).